Here is a 226-residue protein sequence, read N- to C-terminus: Ribonuclease 3 (226 aa).

Residues 5–127 form the RNase III domain; sequence TFQRGDPIGH…IVAAIYLDCG (123 aa). E40 is a Mg(2+) binding site. Residue D44 is part of the active site. Positions 113 and 116 each coordinate Mg(2+). Residue E116 is part of the active site. In terms of domain architecture, DRBM spans 154–224; that stretch reads DPKTRLQEWL…ATLVIAQLDS (71 aa).

This sequence belongs to the ribonuclease III family. Homodimer. It depends on Mg(2+) as a cofactor.

The protein localises to the cytoplasm. The catalysed reaction is Endonucleolytic cleavage to 5'-phosphomonoester.. Digests double-stranded RNA. Involved in the processing of primary rRNA transcript to yield the immediate precursors to the large and small rRNAs (23S and 16S). Processes some mRNAs, and tRNAs when they are encoded in the rRNA operon. Processes pre-crRNA and tracrRNA of type II CRISPR loci if present in the organism. The polypeptide is Ribonuclease 3 (Xanthomonas axonopodis pv. citri (strain 306)).